The sequence spans 97 residues: uncharacterized protein (97 aa).

This is an uncharacterized protein from Methanocaldococcus jannaschii (strain ATCC 43067 / DSM 2661 / JAL-1 / JCM 10045 / NBRC 100440) (Methanococcus jannaschii).